Consider the following 376-residue polypeptide: Ribosomal RNA large subunit methyltransferase G (376 aa).

The protein belongs to the methyltransferase superfamily. RlmG family.

The protein resides in the cytoplasm. The catalysed reaction is guanosine(1835) in 23S rRNA + S-adenosyl-L-methionine = N(2)-methylguanosine(1835) in 23S rRNA + S-adenosyl-L-homocysteine + H(+). Functionally, specifically methylates the guanine in position 1835 (m2G1835) of 23S rRNA. This is Ribosomal RNA large subunit methyltransferase G from Vibrio cholerae serotype O1 (strain ATCC 39541 / Classical Ogawa 395 / O395).